The chain runs to 464 residues: PH domain-containing rcdII (464 aa).

The stretch at 8-210 (KSSKEIIEDL…NTKLMSNLEI (203 aa)) forms a coiled coil. Disordered regions lie at residues 215-290 (NFNN…NSSG) and 317-347 (CNNN…SNSN). 3 stretches are compositionally biased toward low complexity: residues 234–288 (STTT…SSNS), 317–328 (CNNNNNNNNGNS), and 338–347 (RSRSSSSNSN). Positions 353–461 (KIVKEGWLKR…WKDTISSLMP (109 aa)) constitute a PH domain.

This chain is PH domain-containing rcdII (rcdII), found in Dictyostelium discoideum (Social amoeba).